We begin with the raw amino-acid sequence, 271 residues long: 4-diphosphocytidyl-2-C-methyl-D-erythritol kinase (271 aa).

Residue K17 is part of the active site. 97–107 (PVGSGLGGGSS) is a binding site for ATP. Residue D137 is part of the active site.

It belongs to the GHMP kinase family. IspE subfamily.

It catalyses the reaction 4-CDP-2-C-methyl-D-erythritol + ATP = 4-CDP-2-C-methyl-D-erythritol 2-phosphate + ADP + H(+). It participates in isoprenoid biosynthesis; isopentenyl diphosphate biosynthesis via DXP pathway; isopentenyl diphosphate from 1-deoxy-D-xylulose 5-phosphate: step 3/6. In terms of biological role, catalyzes the phosphorylation of the position 2 hydroxy group of 4-diphosphocytidyl-2C-methyl-D-erythritol. The sequence is that of 4-diphosphocytidyl-2-C-methyl-D-erythritol kinase from Thermotoga maritima (strain ATCC 43589 / DSM 3109 / JCM 10099 / NBRC 100826 / MSB8).